Reading from the N-terminus, the 1166-residue chain is Pesticidal crystal protein Cry1Ga (1166 aa).

This sequence belongs to the delta endotoxin family.

Its function is as follows. Promotes colloidosmotic lysis by binding to the midgut epithelial cells of insects. This chain is Pesticidal crystal protein Cry1Ga (cry1Ga), found in Bacillus thuringiensis.